The chain runs to 127 residues: UPF0102 protein SYNAS_23220 (127 aa).

This sequence belongs to the UPF0102 family.

This Syntrophus aciditrophicus (strain SB) protein is UPF0102 protein SYNAS_23220.